Consider the following 358-residue polypeptide: Ribosomal RNA large subunit methyltransferase M (358 aa).

S-adenosyl-L-methionine is bound by residues Ser-191, 224–227 (APGG), Asp-243, Asp-263, and Asp-279. The active-site Proton acceptor is the Lys-308.

The protein belongs to the class I-like SAM-binding methyltransferase superfamily. RNA methyltransferase RlmE family. RlmM subfamily. Monomer.

It localises to the cytoplasm. It carries out the reaction cytidine(2498) in 23S rRNA + S-adenosyl-L-methionine = 2'-O-methylcytidine(2498) in 23S rRNA + S-adenosyl-L-homocysteine + H(+). Functionally, catalyzes the 2'-O-methylation at nucleotide C2498 in 23S rRNA. The protein is Ribosomal RNA large subunit methyltransferase M of Marinobacter nauticus (strain ATCC 700491 / DSM 11845 / VT8) (Marinobacter aquaeolei).